The primary structure comprises 608 residues: MNPVDQPPPPPLTQQPEEQAKEDHDDGDERLFRDPLTTYEYLDDCRDDEEFCHQFLRAYLTPIRNRQEAVRAGLLCRTPEDLAAAGGQKRKTPAPKHPKHAMVYIRRSCLVHSACATAHGKYDIRGLTLESDLAVWAALRGVPLPPDPQHFRWLNAGAFRRLVHEAQYLPEISRAAKRIALAVATGQYVVCTLLDYKTFGTRTHYLRQLCSMTEELYLRLDGTLCLFLEPEERELIGRCLPAALCRGLPVKYRTHRAAVFFHATFMARAEAALKDLYAAFCECGDGRDDGGNHNGNYGGGDHSSLSPSAVASHHSRLEHAELRLERNRHLGAFHLPAIRHLTAGDVARVQDSVSRDLGFADWSQTLVDDYFLLPAGWACANPRRGYAMYLASNAVLALRIIRLLRASIRHEYTACIRMLSGDVQRLIRLFKGEAALLRKGLAQNPVQRRELSRFRKHVHDLKRIRFTEDTFVETFCDFLELVQRIPDYRSVSLRIKRELLCLHVFKLRRGCRAPPTPEAVRVQRLLWHSLRHGDAPQDRTRLPQFSSALSDAELSNHANRCRRKAPLELGPAVVAAPGPSVRYRAHIQKFERLHVRRFRPHEVGGHAT.

Residues methionine 1 to threonine 13 are compositionally biased toward pro residues. The segment at methionine 1–arginine 33 is disordered. Over residues glutamate 18–arginine 33 the composition is skewed to basic and acidic residues.

It belongs to the herpesviridae U4 family. As to quaternary structure, interacts with host KAT5, PSME3 and EP400.

The protein localises to the host nucleus. Its subcellular location is the host nucleolus. In terms of biological role, promotes a cell cycle arrest in G0/G1 by inducing the proteasomal degradation of host histone acetyltransferase KAT5/Tip60. The protein is Protein UL27 (UL27) of Homo sapiens (Human).